The sequence spans 1799 residues: Bromodomain and WD repeat-containing protein 3 (1799 aa).

WD repeat units lie at residues 170-209, 213-251, 255-297, 307-347, 353-393, 400-452, 456-495, and 502-542; these read IKMH…IWAT, RLLA…VWCL, APVA…FWQW, RPVK…IYYL, EKIA…IWQY, SIVL…VWNS, QLLH…IWDL, and RNYF…LFGF. S693 bears the Phosphoserine mark. Positions 766-912 are disordered; it reads KKPSYPIQRN…KKKKGGLVSM (147 aa). Residues 784 to 794 show a composition bias toward basic residues; it reads SLRRTQRKRQH. A compositionally biased stretch (polar residues) spans 795–816; that stretch reads TYLTRSNIEHNSQASSQTSGVQ. Positions 817–828 are enriched in acidic residues; it reads EDSDSSSEEDET. Residues 845–858 are compositionally biased toward low complexity; the sequence is SESSSSDSSSEYSD. Residues 875–884 show a composition bias toward polar residues; the sequence is RQATQKIYSS. S884 and S885 each carry phosphoserine. Residues 897-907 show a composition bias toward basic residues; sequence KKPKQTKKKKG. A Bromo 1 domain is found at 1136-1243; sequence WGAHSRDEEC…DVLLRFIGDQ (108 aa). 4 disordered regions span residues 1258 to 1291, 1321 to 1366, 1435 to 1482, and 1517 to 1723; these read EDPD…KCRG, EPFR…IDTP, IQSQ…QNTS, and SPSS…AKRA. The span at 1260-1276 shows a compositional bias: acidic residues; sequence PDSSDLEEDSEMVDLDS. The Bromo 2 domain maps to 1298–1427; that stretch reads CNPDAWKKQC…ALFENHIKNI (130 aa). Low complexity predominate over residues 1333 to 1348; that stretch reads PVQQQQEGESSQSVPP. The span at 1438-1450 shows a compositional bias: basic residues; the sequence is QKRRRPRYRKRLR. Low complexity-rich tracts occupy residues 1451–1463 and 1517–1530; these read SSSS…RAPS and SPSS…SGNS. S1574 and S1576 each carry phosphoserine. Over residues 1584–1596 the composition is skewed to basic and acidic residues; that stretch reads GEEKEMKETKEQV. Low complexity predominate over residues 1598–1623; that stretch reads LSSSESGELGSSLSSESTSGSDSDSE. Residues 1624-1640 show a composition bias toward basic and acidic residues; that stretch reads STSRTDQDYVDGDHDYS. Basic residues-rich tracts occupy residues 1646 to 1663 and 1681 to 1694; these read RPKR…RNWK and RGGR…RGGR. S1760 carries the post-translational modification Phosphoserine.

In terms of biological role, plays a role in the regulation of cell morphology and cytoskeletal organization. Required in the control of cell shape. The sequence is that of Bromodomain and WD repeat-containing protein 3 (Brwd3) from Mus musculus (Mouse).